We begin with the raw amino-acid sequence, 452 residues long: UDP-N-acetylmuramate--L-alanine ligase (452 aa).

110–116 (GTHGKTT) is an ATP binding site.

Belongs to the MurCDEF family.

It localises to the cytoplasm. It carries out the reaction UDP-N-acetyl-alpha-D-muramate + L-alanine + ATP = UDP-N-acetyl-alpha-D-muramoyl-L-alanine + ADP + phosphate + H(+). It functions in the pathway cell wall biogenesis; peptidoglycan biosynthesis. Functionally, cell wall formation. The sequence is that of UDP-N-acetylmuramate--L-alanine ligase from Francisella philomiragia subsp. philomiragia (strain ATCC 25017 / CCUG 19701 / FSC 153 / O#319-036).